The sequence spans 194 residues: MRQAEIKRKTQETDIELAVNLDQQEPVAIETGVGFFDHMLTLFARHSRISLTVKAEGDLWVDSHHTVEDVGIVLGQALRQALGDKAGINRYGTSFVPMDETLGMASLDLSGRSYLVFEADFDNPKLGNFETELVEEFFQALAFNLQMNLHLKILHGKNSHHKAESLFKATGRALREAITINPEIHGVNSTKGLL.

It belongs to the imidazoleglycerol-phosphate dehydratase family.

The protein localises to the cytoplasm. The catalysed reaction is D-erythro-1-(imidazol-4-yl)glycerol 3-phosphate = 3-(imidazol-4-yl)-2-oxopropyl phosphate + H2O. Its pathway is amino-acid biosynthesis; L-histidine biosynthesis; L-histidine from 5-phospho-alpha-D-ribose 1-diphosphate: step 6/9. The protein is Imidazoleglycerol-phosphate dehydratase of Streptococcus sanguinis (strain SK36).